Here is a 94-residue protein sequence, read N- to C-terminus: Viral macrophage inflammatory protein 2 (94 aa).

A signal peptide spans 1 to 20 (MDTKGILLVAVLTALLCLQS). Intrachain disulfides connect C34/C58 and C35/C74.

It belongs to the intercrine beta (chemokine CC) family. Monomer. Interacts with human chemokine receptor CXCR4.

The protein resides in the secreted. Its function is as follows. Blocks infection by several different human immunodeficiency virus type 1 (HIV-1) strains. This occurs because vMIP-II binds to a wide range of chemokine receptors. May form part of the response to host defenses contributing to virus-induced neoplasia and may have relevance to KSHV and HIV-I interactions. The sequence is that of Viral macrophage inflammatory protein 2 (ORF K4) from Human herpesvirus 8 type P (isolate GK18) (HHV-8).